A 326-amino-acid polypeptide reads, in one-letter code: MGNIWVAFTVSLAVTLIAGPLVIPVLRRLKFGQSIRSDGPSRHLQKAGTPTMGGIIFLAGTAAGGFLLIRSADGLIVLLMALGYGFIGFLDDYIKVVLKRSLGLRAREKLLGQVLLAAALAYWAVFEAGRGTGIVLPFSGFLTPGGIQMDLGWWPFLAFTVLLVVFMSNAVNLTDGLDGLAAGVSMLVALALVPVALAADRAGVAAGMAALAGGCLGFLFFNFHPAKVFMGDTGSLALGGGLCAAAVVTKSELLFLIIGGIYVLEALSVIIQVISFQTTGRRVFRMSPLHHHFELGGWSENRVVITFWALTLVFAAAGLAGLYRLV.

A run of 10 helical transmembrane segments spans residues 4–24, 49–69, 74–94, 109–129, 151–171, 179–199, 203–223, 228–248, 254–274, and 303–323; these read IWVA…LVIP, TPTM…FLLI, GLIV…DDYI, KLLG…FEAG, LGWW…SNAV, GLAA…ALAA, GVAA…FFNF, VFMG…AAVV, LFLI…IQVI, and VVIT…AGLY.

It belongs to the glycosyltransferase 4 family. MraY subfamily. The cofactor is Mg(2+).

The protein resides in the cell membrane. The catalysed reaction is UDP-N-acetyl-alpha-D-muramoyl-L-alanyl-gamma-D-glutamyl-meso-2,6-diaminopimeloyl-D-alanyl-D-alanine + di-trans,octa-cis-undecaprenyl phosphate = di-trans,octa-cis-undecaprenyl diphospho-N-acetyl-alpha-D-muramoyl-L-alanyl-D-glutamyl-meso-2,6-diaminopimeloyl-D-alanyl-D-alanine + UMP. Its pathway is cell wall biogenesis; peptidoglycan biosynthesis. In terms of biological role, catalyzes the initial step of the lipid cycle reactions in the biosynthesis of the cell wall peptidoglycan: transfers peptidoglycan precursor phospho-MurNAc-pentapeptide from UDP-MurNAc-pentapeptide onto the lipid carrier undecaprenyl phosphate, yielding undecaprenyl-pyrophosphoryl-MurNAc-pentapeptide, known as lipid I. In Pelotomaculum thermopropionicum (strain DSM 13744 / JCM 10971 / SI), this protein is Phospho-N-acetylmuramoyl-pentapeptide-transferase.